Here is a 31-residue protein sequence, read N- to C-terminus: Cytolysin Oshem 2 (31 aa).

It localises to the secreted. The protein localises to the nematocyst. The protein resides in the target cell membrane. In terms of biological role, cytolysin that shows weak hemolysis and weak myonecrosis. This chain is Cytolysin Oshem 2, found in Olindias sambaquiensis (Hydromedusa).